A 118-amino-acid polypeptide reads, in one-letter code: Large ribosomal subunit protein uL22 (118 aa).

The protein belongs to the universal ribosomal protein uL22 family. In terms of assembly, part of the 50S ribosomal subunit.

Functionally, this protein binds specifically to 23S rRNA; its binding is stimulated by other ribosomal proteins, e.g. L4, L17, and L20. It is important during the early stages of 50S assembly. It makes multiple contacts with different domains of the 23S rRNA in the assembled 50S subunit and ribosome. In terms of biological role, the globular domain of the protein is located near the polypeptide exit tunnel on the outside of the subunit, while an extended beta-hairpin is found that lines the wall of the exit tunnel in the center of the 70S ribosome. This chain is Large ribosomal subunit protein uL22, found in Chlorobium limicola (strain DSM 245 / NBRC 103803 / 6330).